A 364-amino-acid chain; its full sequence is Dihydroorotate dehydrogenase (quinone) (364 aa).

Residues 61 to 65 and S85 each bind FMN; that span reads AGFDK. Residue K65 participates in substrate binding. 110-114 is a substrate binding site; sequence NRMGF. FMN contacts are provided by N139 and N170. N170 provides a ligand contact to substrate. The active-site Nucleophile is the S173. N175 contacts substrate. The FMN site is built by K214 and S242. 243–244 provides a ligand contact to substrate; that stretch reads NT. Residues G266, G295, and 316 to 317 contribute to the FMN site; that span reads YS.

Belongs to the dihydroorotate dehydrogenase family. Type 2 subfamily. In terms of assembly, monomer. It depends on FMN as a cofactor.

The protein localises to the cell membrane. It catalyses the reaction (S)-dihydroorotate + a quinone = orotate + a quinol. Its pathway is pyrimidine metabolism; UMP biosynthesis via de novo pathway; orotate from (S)-dihydroorotate (quinone route): step 1/1. Its function is as follows. Catalyzes the conversion of dihydroorotate to orotate with quinone as electron acceptor. This Bradyrhizobium sp. (strain ORS 278) protein is Dihydroorotate dehydrogenase (quinone).